The chain runs to 273 residues: Large ribosomal subunit protein uL2 (273 aa).

The tract at residues 221–262 (RGTAMNPVDHPHGGGEGRNFGKHPVTPWGVQTKGKKTRHNKR) is disordered. The span at 253 to 262 (KGKKTRHNKR) shows a compositional bias: basic residues.

Belongs to the universal ribosomal protein uL2 family. Part of the 50S ribosomal subunit. Forms a bridge to the 30S subunit in the 70S ribosome.

In terms of biological role, one of the primary rRNA binding proteins. Required for association of the 30S and 50S subunits to form the 70S ribosome, for tRNA binding and peptide bond formation. It has been suggested to have peptidyltransferase activity; this is somewhat controversial. Makes several contacts with the 16S rRNA in the 70S ribosome. The protein is Large ribosomal subunit protein uL2 of Haemophilus ducreyi (strain 35000HP / ATCC 700724).